A 307-amino-acid chain; its full sequence is 4-hydroxy-3-methylbut-2-enyl diphosphate reductase (307 aa).

Position 13 (C13) interacts with [4Fe-4S] cluster. 2 residues coordinate (2E)-4-hydroxy-3-methylbut-2-enyl diphosphate: H42 and H75. Dimethylallyl diphosphate contacts are provided by H42 and H75. Isopentenyl diphosphate is bound by residues H42 and H75. A [4Fe-4S] cluster-binding site is contributed by C97. Residue H125 coordinates (2E)-4-hydroxy-3-methylbut-2-enyl diphosphate. Position 125 (H125) interacts with dimethylallyl diphosphate. An isopentenyl diphosphate-binding site is contributed by H125. E127 functions as the Proton donor in the catalytic mechanism. Position 165 (T165) interacts with (2E)-4-hydroxy-3-methylbut-2-enyl diphosphate. A [4Fe-4S] cluster-binding site is contributed by C195. (2E)-4-hydroxy-3-methylbut-2-enyl diphosphate is bound by residues S223, S224, N225, and S267. Positions 223, 224, 225, and 267 each coordinate dimethylallyl diphosphate. Isopentenyl diphosphate is bound by residues S223, S224, N225, and S267.

It belongs to the IspH family. The cofactor is [4Fe-4S] cluster.

The enzyme catalyses isopentenyl diphosphate + 2 oxidized [2Fe-2S]-[ferredoxin] + H2O = (2E)-4-hydroxy-3-methylbut-2-enyl diphosphate + 2 reduced [2Fe-2S]-[ferredoxin] + 2 H(+). It catalyses the reaction dimethylallyl diphosphate + 2 oxidized [2Fe-2S]-[ferredoxin] + H2O = (2E)-4-hydroxy-3-methylbut-2-enyl diphosphate + 2 reduced [2Fe-2S]-[ferredoxin] + 2 H(+). The protein operates within isoprenoid biosynthesis; dimethylallyl diphosphate biosynthesis; dimethylallyl diphosphate from (2E)-4-hydroxy-3-methylbutenyl diphosphate: step 1/1. Its pathway is isoprenoid biosynthesis; isopentenyl diphosphate biosynthesis via DXP pathway; isopentenyl diphosphate from 1-deoxy-D-xylulose 5-phosphate: step 6/6. In terms of biological role, catalyzes the conversion of 1-hydroxy-2-methyl-2-(E)-butenyl 4-diphosphate (HMBPP) into a mixture of isopentenyl diphosphate (IPP) and dimethylallyl diphosphate (DMAPP). Acts in the terminal step of the DOXP/MEP pathway for isoprenoid precursor biosynthesis. The polypeptide is 4-hydroxy-3-methylbut-2-enyl diphosphate reductase (Chlamydia trachomatis serovar A (strain ATCC VR-571B / DSM 19440 / HAR-13)).